We begin with the raw amino-acid sequence, 640 residues long: Preterminal protein (640 aa).

The tract at residues 232-257 is disordered; the sequence is PSQEGEGEERENPDRASSRPRPQETV. Positions 351 to 360 match the Nuclear localization signal motif; it reads RLPVRRRRRR. O-(5'-phospho-DNA)-serine is present on S549. The segment at 614–640 is disordered; it reads GADVPLPAMPPGPEPPLPPGARPRHRF. Over residues 620–634 the composition is skewed to pro residues; sequence PAMPPGPEPPLPPGA.

Belongs to the adenoviridae terminal protein family. As to quaternary structure, heterodimer with the polymerase; this heterodimer binds to bp 9 to 18 of the genome. Interacts with host POU2F1; POU2F1 binds to the auxiliary sequences in the inverted terminal repeats and tethers the pTP-POL heterodimer to the origin DNA thereby participating in the assembly of the pre-initiation complex (POL-TP-DBP-NFIA-POU2F1). Post-translationally, preterminal protein is used to replicate viral genome, upon genomic encapsidation it is processed first into iTP and finally into TP by adenovirus protease.

The protein localises to the host nucleus matrix. Protein covalently bound to the viral DNA that acts as a primer for viral genomic replication by DNA strand displacement. Assembles on the viral origin of replication in an initiation complex with viral polymerase, DBP, host NFIA and host POU2F1/OCT1. During initiation, the polymerase covalently couples the first dCTP with Ser-580 of pTP. The terminal protein stimulates the template activity over 20 fold compared to protein-free templates. Neo-synthesized viral genomes are linked to two preterminal proteins, one for each 5' end. These new genomes are encapsidated in the nucleus, and during capsid maturation by viral protease, preterminal protein is first cleaved into intermediary (iTP), then into mature TP. May play a role in host nuclear matrix localization of genomic DNA. The chain is Preterminal protein from Human adenovirus B serotype 7 (HAdV-7).